Reading from the N-terminus, the 92-residue chain is Small ribosomal subunit protein uS19 (92 aa).

Belongs to the universal ribosomal protein uS19 family.

Protein S19 forms a complex with S13 that binds strongly to the 16S ribosomal RNA. This Jannaschia sp. (strain CCS1) protein is Small ribosomal subunit protein uS19.